A 41-amino-acid chain; its full sequence is Large ribosomal subunit protein bL36 (41 aa).

The protein belongs to the bacterial ribosomal protein bL36 family.

The protein is Large ribosomal subunit protein bL36 of Novosphingobium aromaticivorans (strain ATCC 700278 / DSM 12444 / CCUG 56034 / CIP 105152 / NBRC 16084 / F199).